The following is a 193-amino-acid chain: Ion-translocating oxidoreductase complex subunit B (193 aa).

Positions 1-26 are hydrophobic; it reads MSTMLIAVILLTLLALFFGVLLGFAA. The 4Fe-4S domain occupies 32 to 90; that stretch reads EGNPIVDELEAILPQTQCGQCGYPGCRPYAEAIANGDKVNKCPPGGTATMEKLASLMGV. [4Fe-4S] cluster-binding residues include C49, C52, C57, C73, C114, C117, C120, C124, C144, C147, C150, and C154. 4Fe-4S ferredoxin-type domains follow at residues 105–134 and 136–164; these read KVAYIREDECIGCTKCIQACPVDAIIGAGK and MHTVLTADCTGCDLCVEPCPVDCIDMLPV.

It belongs to the 4Fe4S bacterial-type ferredoxin family. RnfB subfamily. In terms of assembly, the complex is composed of six subunits: RnfA, RnfB, RnfC, RnfD, RnfE and RnfG. [4Fe-4S] cluster serves as cofactor.

It is found in the cell inner membrane. In terms of biological role, part of a membrane-bound complex that couples electron transfer with translocation of ions across the membrane. The protein is Ion-translocating oxidoreductase complex subunit B of Shewanella sp. (strain MR-4).